Reading from the N-terminus, the 306-residue chain is Peroxisome biogenesis factor 2 (306 aa).

Residues 1–15 are Peroxisomal matrix-facing; sequence MAASENNMEEINPVL. Residues 16-42 form a helical membrane-spanning segment; it reads RISQLDAIELNKALEQLIWSQFSSCFQ. The Cytoplasmic portion of the chain corresponds to 43–48; it reads GFKPGL. A helical transmembrane segment spans residues 49–74; it reads LTRFEPEIKASLCLFLWRYTIYTKNA. The Peroxisomal matrix portion of the chain corresponds to 75-98; sequence TVGQTILNMQYKNDLAVTKKYRPL. A helical membrane pass occupies residues 99–125; sequence NKQQKVWFALFLVGGKWLEERSFDLFS. Topologically, residues 126-134 are cytoplasmic; that stretch reads NHPFGASFQ. Residues 135-161 traverse the membrane as a helical segment; that stretch reads RTKYFLNAISGLLKFGALLNFLIFLQQ. Over 162–188 the chain is Peroxisomal matrix; it reads GKFATLTERLLGIRSVFSRPQDVRQVG. Residues 189–212 form a helical membrane-spanning segment; that stretch reads FEYMNREILWHGFAEFLIFLLPLI. The Cytoplasmic segment spans residues 213–306; it reads NTQKLKSKLF…KIEISEVHTL (94 aa). Zn(2+) contacts are provided by Cys245, Cys248, Cys260, His262, Cys265, Cys268, Cys281, and Cys284. Residues 245–285 form an RING-type zinc finger; sequence CCLCGEWPAMPHTIGCSHVFCYYCIKSNYMSDMYFTCPKCS.

This sequence belongs to the pex2/pex10/pex12 family. As to quaternary structure, component of the PEX2-PEX10-PEX12 retrotranslocation channel.

It is found in the peroxisome membrane. The catalysed reaction is [E2 ubiquitin-conjugating enzyme]-S-ubiquitinyl-L-cysteine + [acceptor protein]-L-cysteine = [E2 ubiquitin-conjugating enzyme]-L-cysteine + [acceptor protein]-S-ubiquitinyl-L-cysteine.. It catalyses the reaction S-ubiquitinyl-[E2 ubiquitin-conjugating enzyme]-L-cysteine + [acceptor protein]-L-lysine = [E2 ubiquitin-conjugating enzyme]-L-cysteine + N(6)-ubiquitinyl-[acceptor protein]-L-lysine.. Its pathway is protein modification; protein ubiquitination. In terms of biological role, E3 ubiquitin-protein ligase component of a retrotranslocation channel required for peroxisome organization by mediating export of the PEX5 receptor from peroxisomes to the cytosol, thereby promoting PEX5 recycling. The retrotranslocation channel is composed of PEX2, PEX10 and PEX12; each subunit contributing transmembrane segments that coassemble into an open channel that specifically allows the passage of PEX5 through the peroxisomal membrane. PEX2 also regulates peroxisome organization by acting as a E3 ubiquitin-protein ligase. This is Peroxisome biogenesis factor 2 from Xenopus laevis (African clawed frog).